A 127-amino-acid polypeptide reads, in one-letter code: Small ribosomal subunit protein uS11 (127 aa).

Belongs to the universal ribosomal protein uS11 family. As to quaternary structure, part of the 30S ribosomal subunit. Interacts with proteins S7 and S18. Binds to IF-3.

In terms of biological role, located on the platform of the 30S subunit, it bridges several disparate RNA helices of the 16S rRNA. Forms part of the Shine-Dalgarno cleft in the 70S ribosome. In Nitrosococcus oceani (strain ATCC 19707 / BCRC 17464 / JCM 30415 / NCIMB 11848 / C-107), this protein is Small ribosomal subunit protein uS11.